A 401-amino-acid chain; its full sequence is uncharacterized protein (401 aa).

The protein belongs to the serpin family.

In terms of biological role, may act as an inhibitor for a host chymotrypsin-like protease. This is an uncharacterized protein from Acanthamoeba polyphaga mimivirus (APMV).